Consider the following 474-residue polypeptide: Trehalose-6-phosphate synthase (474 aa).

A D-glucose 6-phosphate-binding site is contributed by arginine 10. Residue 22 to 23 (GG) participates in UDP-alpha-D-glucose binding. D-glucose 6-phosphate-binding residues include tyrosine 77 and aspartate 131. Residues arginine 263 and lysine 268 each coordinate UDP-alpha-D-glucose. Position 301 (arginine 301) interacts with D-glucose 6-phosphate. Residues phenylalanine 340 and 366–370 (LVAKE) contribute to the UDP-alpha-D-glucose site.

Belongs to the glycosyltransferase 20 family. As to quaternary structure, homotetramer.

It carries out the reaction D-glucose 6-phosphate + UDP-alpha-D-glucose = alpha,alpha-trehalose 6-phosphate + UDP + H(+). The protein operates within glycan biosynthesis; trehalose biosynthesis. Probably involved in the osmoprotection via the biosynthesis of trehalose. Catalyzes the transfer of glucose from UDP-alpha-D-glucose (UDP-Glc) to D-glucose 6-phosphate (Glc-6-P) to form trehalose-6-phosphate. Acts with retention of the anomeric configuration of the UDP-sugar donor. This chain is Trehalose-6-phosphate synthase, found in Escherichia coli O157:H7.